The chain runs to 205 residues: Urease accessory protein UreG (205 aa).

Residue 10-17 (GPVGAGKT) participates in GTP binding.

The protein belongs to the SIMIBI class G3E GTPase family. UreG subfamily. Homodimer. UreD, UreF and UreG form a complex that acts as a GTP-hydrolysis-dependent molecular chaperone, activating the urease apoprotein by helping to assemble the nickel containing metallocenter of UreC. The UreE protein probably delivers the nickel.

It is found in the cytoplasm. Functionally, facilitates the functional incorporation of the urease nickel metallocenter. This process requires GTP hydrolysis, probably effectuated by UreG. This Corynebacterium glutamicum (strain R) protein is Urease accessory protein UreG.